Here is a 334-residue protein sequence, read N- to C-terminus: Biotin synthase (334 aa).

In terms of domain architecture, Radical SAM core spans 55–285 (GSSGSIHACS…VHPRKIIKIA (231 aa)). 3 residues coordinate [4Fe-4S] cluster: Cys73, Cys77, and Cys80. Positions 152, 213, and 283 each coordinate [2Fe-2S] cluster.

This sequence belongs to the radical SAM superfamily. Biotin synthase family. In terms of assembly, homodimer. Requires [4Fe-4S] cluster as cofactor. [2Fe-2S] cluster serves as cofactor.

The enzyme catalyses (4R,5S)-dethiobiotin + (sulfur carrier)-SH + 2 reduced [2Fe-2S]-[ferredoxin] + 2 S-adenosyl-L-methionine = (sulfur carrier)-H + biotin + 2 5'-deoxyadenosine + 2 L-methionine + 2 oxidized [2Fe-2S]-[ferredoxin]. The protein operates within cofactor biosynthesis; biotin biosynthesis; biotin from 7,8-diaminononanoate: step 2/2. Functionally, catalyzes the conversion of dethiobiotin (DTB) to biotin by the insertion of a sulfur atom into dethiobiotin via a radical-based mechanism. This Chlorobium phaeobacteroides (strain DSM 266 / SMG 266 / 2430) protein is Biotin synthase.